The following is a 262-amino-acid chain: Nodulation protein J (262 aa).

The region spanning 33-259 (ASLLGHLAEP…FLSTALLRRR (227 aa)) is the ABC transmembrane type-2 domain. 6 consecutive transmembrane segments (helical) span residues 35–55 (LLGHLAEPLIYLFGLGAGLGV), 60–80 (VGGVSYTAFLAAGMVATSAMT), 125–145 (AALAGAGIGVVAAALGYTQWL), 148–168 (LYALPVIALTGLAFASLGMVV), 177–197 (YFIFYQTLVITPILFLSGAVF), and 231–251 (VVDVCQHVGALCIYIVIPFFL).

This sequence belongs to the ABC-2 integral membrane protein family. Lipooligosaccharide exporter (TC 3.A.1.102) subfamily. The complex is composed of two ATP-binding proteins (NodI) and two transmembrane proteins (NodJ).

The protein resides in the cell inner membrane. Functionally, part of the ABC transporter complex NodIJ involved in the export of the nodulation factors (Nod factors), the bacterial signal molecules that induce symbiosis and subsequent nodulation induction. Nod factors are LCO (lipo-chitin oligosaccharide), a modified beta-1,4-linked N-acetylglucosamine oligosaccharide. This subunit encodes the transporter. The sequence is that of Nodulation protein J (nodJ) from Rhizobium leguminosarum bv. trifolii.